A 96-amino-acid polypeptide reads, in one-letter code: Putative defensin-like protein 236 (96 aa).

An N-terminal signal peptide occupies residues 1–23 (MKNATSLIIYCFLMFLLMNNVKG). Intrachain disulfides connect Cys-31/Cys-93, Cys-41/Cys-70, Cys-49/Cys-83, and Cys-68/Cys-85.

The protein belongs to the DEFL family.

It localises to the secreted. This chain is Putative defensin-like protein 236 (SCRL20), found in Arabidopsis thaliana (Mouse-ear cress).